We begin with the raw amino-acid sequence, 90 residues long: Large ribosomal subunit protein bL27 (90 aa).

A disordered region spans residues 1–22 (MAHKKAGGSTRNGRDSNPKMLG).

This sequence belongs to the bacterial ribosomal protein bL27 family.

This chain is Large ribosomal subunit protein bL27, found in Coxiella burnetii (strain Dugway 5J108-111).